Reading from the N-terminus, the 207-residue chain is Uracil phosphoribosyltransferase (207 aa).

5-phospho-alpha-D-ribose 1-diphosphate-binding positions include R77, R102, and 129–137 (DPMLATGGS). Uracil is bound by residues I192 and 197 to 199 (GDA). A 5-phospho-alpha-D-ribose 1-diphosphate-binding site is contributed by D198.

The protein belongs to the UPRTase family. It depends on Mg(2+) as a cofactor.

It carries out the reaction UMP + diphosphate = 5-phospho-alpha-D-ribose 1-diphosphate + uracil. Its pathway is pyrimidine metabolism; UMP biosynthesis via salvage pathway; UMP from uracil: step 1/1. With respect to regulation, allosterically activated by GTP. In terms of biological role, catalyzes the conversion of uracil and 5-phospho-alpha-D-ribose 1-diphosphate (PRPP) to UMP and diphosphate. In Mycoplasma capricolum subsp. capricolum (strain California kid / ATCC 27343 / NCTC 10154), this protein is Uracil phosphoribosyltransferase.